A 371-amino-acid chain; its full sequence is Alanine dehydrogenase (371 aa).

The substrate site is built by R15 and K75. The Proton donor/acceptor role is filled by H96. NAD(+) contacts are provided by residues S134, 178–179, D198, K203, S220, 239–240, 267–270, R279, and 298–301; these read TA, VL, IAID, and VANM. D270 acts as the Proton donor/acceptor in catalysis. 2 residues coordinate Mg(2+): E323 and H327.

This sequence belongs to the AlaDH/PNT family. As to quaternary structure, homohexamer. Trimer of dimers. Mg(2+) serves as cofactor.

The protein resides in the secreted. It carries out the reaction L-alanine + NAD(+) + H2O = pyruvate + NH4(+) + NADH + H(+). The protein operates within amino-acid degradation; L-alanine degradation via dehydrogenase pathway; NH(3) and pyruvate from L-alanine: step 1/1. In terms of biological role, catalyzes the reversible reductive amination of pyruvate to L-alanine. However, since the physiological environment of M.tuberculosis has a neutral pH, it can be assumed that the enzyme catalyzes exclusively the formation of L-alanine. May play a role in cell wall synthesis as L-alanine is an important constituent of the peptidoglycan layer. In Mycobacterium tuberculosis (strain CDC 1551 / Oshkosh), this protein is Alanine dehydrogenase (ald).